Reading from the N-terminus, the 321-residue chain is Fibronectin type III domain-containing protein 8 (321 aa).

The Fibronectin type-III domain occupies 175–277; sequence VPEVPFICEH…KPYKFATVST (103 aa).

This chain is Fibronectin type III domain-containing protein 8 (Fndc8), found in Mus musculus (Mouse).